Consider the following 308-residue polypeptide: Nuclear transcription factor Y subunit A-5 (308 aa).

Residues 1 to 10 (MQVFQRKEDS) are compositionally biased toward basic and acidic residues. Disordered stretches follow at residues 1–26 (MQVF…IQGS) and 49–71 (GLQL…GGGE). The span at 11 to 26 (SWGNSMPTTNSNIQGS) shows a compositional bias: polar residues. The short motif at 181–204 (FVNAKQYHAILRRRKHRAKLEAQN) is the Subunit association domain (SAD) element. A DNA-binding region (NFYA/HAP2-type) is located at residues 211–236 (KPYLHESRHLHALKRARGSGGRFLNT). Residues 251–273 (MANGQNFSMSPHGGGSGIGSSSI) are disordered.

This sequence belongs to the NFYA/HAP2 subunit family. As to quaternary structure, heterotrimeric transcription factor composed of three components, NF-YA, NF-YB and NF-YC. NF-YB and NF-YC must interact and dimerize for NF-YA association and DNA binding. Expressed in the whole plant, except roots. Present in etiolated seedlings.

Its subcellular location is the nucleus. Functionally, stimulates the transcription of various genes by recognizing and binding to a CCAAT motif in promoters. Involved in the blue light (BL) and abscisic acid (ABA) signaling pathways. This chain is Nuclear transcription factor Y subunit A-5 (NFYA5), found in Arabidopsis thaliana (Mouse-ear cress).